The chain runs to 590 residues: Muscarinic acetylcholine receptor M3 (590 aa).

The Extracellular portion of the chain corresponds to 1 to 67 (MTLHNNNTTS…DPLGGHTIWQ (67 aa)). N-linked (GlcNAc...) asparagine glycosylation is found at N6, N7, N15, N41, N48, and N53. The helical transmembrane segment at 68-91 (VVFIAFLTGVLALVTIIGNILVIV) threads the bilayer. The Cytoplasmic segment spans residues 92 to 104 (AFKVNKQLKTVNN). A helical membrane pass occupies residues 105-125 (YFLLSLACADLIIGVISMNLF). Topologically, residues 126 to 142 (TTYIIMNRWALGNLACD) are extracellular. C141 and C221 are disulfide-bonded. The chain crosses the membrane as a helical span at residues 143–164 (LWLSIDYVASNASVMNLLVISF). Residues 165 to 184 (DRYFSITRPLTYRAKRTTKR) lie on the Cytoplasmic side of the membrane. A helical transmembrane segment spans residues 185–207 (AGVMIGLAWVISFILWAPAILFW). Topologically, residues 208–229 (QYFVGKRTVPPGECFIQFLSEP) are extracellular. Residues 230 to 252 (TITFGTAIAAFYMPVTIMTILYW) traverse the membrane as a helical segment. The Cytoplasmic portion of the chain corresponds to 253-492 (RIYKETEKRT…LIKEKKAAQT (240 aa)). Residues 275 to 281 (AEAENFV) carry the Basolateral sorting signal motif. A disordered region spans residues 324–357 (AEQMDQDHSSSDSWNNNDAAASLENSASSDEEDI). Positions 334 to 345 (SDSWNNNDAAAS) are enriched in low complexity. The residue at position 385 (S385) is a Phosphoserine. Residues 398–419 (SVGLERKPSKLQTQQSMDDGGS) are disordered. The segment covering 407–419 (KLQTQQSMDDGGS) has biased composition (polar residues). The helical transmembrane segment at 493–513 (LSAILLAFIITWTPYNIMVLV) threads the bilayer. Residues 514 to 527 (NTFCDSCIPKTYWN) lie on the Extracellular side of the membrane. Residues 528 to 547 (LGYWLCYINSTVNPVCYALC) traverse the membrane as a helical segment. Over 548–590 (NKTFRNTFKMLLLCQCDKRKRRKQQYQQRQSVIFHKRVPEQAL) the chain is Cytoplasmic.

This sequence belongs to the G-protein coupled receptor 1 family. Muscarinic acetylcholine receptor subfamily. CHRM3 sub-subfamily. Homodimer; the dimers can form tetramers. Interacts with NALCN. Interacts with TMEM147.

It localises to the cell membrane. Its subcellular location is the postsynaptic cell membrane. The protein resides in the basolateral cell membrane. The protein localises to the endoplasmic reticulum membrane. Functionally, the muscarinic acetylcholine receptor mediates various cellular responses, including inhibition of adenylate cyclase, breakdown of phosphoinositides and modulation of potassium channels through the action of G proteins. Primary transducing effect is Pi turnover. This chain is Muscarinic acetylcholine receptor M3 (CHRM3), found in Bos taurus (Bovine).